Here is a 204-residue protein sequence, read N- to C-terminus: Holliday junction branch migration complex subunit RuvA (204 aa).

Positions 1 to 64 (MISRMKGIIL…EDAQLLYGFH (64 aa)) are domain I. Residues 65–143 (HPKERAMFSE…NLNKNLFKST (79 aa)) are domain II. Residues 144-155 (ADHMLSSVSTDL) form a flexible linker region. The tract at residues 156-204 (SAKSAEAEAISALISLGYKPQEAAQLIKNIAQPDLDSQALIKHALRSTL) is domain III.

It belongs to the RuvA family. As to quaternary structure, homotetramer. Forms an RuvA(8)-RuvB(12)-Holliday junction (HJ) complex. HJ DNA is sandwiched between 2 RuvA tetramers; dsDNA enters through RuvA and exits via RuvB. An RuvB hexamer assembles on each DNA strand where it exits the tetramer. Each RuvB hexamer is contacted by two RuvA subunits (via domain III) on 2 adjacent RuvB subunits; this complex drives branch migration. In the full resolvosome a probable DNA-RuvA(4)-RuvB(12)-RuvC(2) complex forms which resolves the HJ.

Its subcellular location is the cytoplasm. Functionally, the RuvA-RuvB-RuvC complex processes Holliday junction (HJ) DNA during genetic recombination and DNA repair, while the RuvA-RuvB complex plays an important role in the rescue of blocked DNA replication forks via replication fork reversal (RFR). RuvA specifically binds to HJ cruciform DNA, conferring on it an open structure. The RuvB hexamer acts as an ATP-dependent pump, pulling dsDNA into and through the RuvAB complex. HJ branch migration allows RuvC to scan DNA until it finds its consensus sequence, where it cleaves and resolves the cruciform DNA. The protein is Holliday junction branch migration complex subunit RuvA of Hamiltonella defensa subsp. Acyrthosiphon pisum (strain 5AT).